The chain runs to 264 residues: S-adenosylmethionine decarboxylase proenzyme (264 aa).

The active-site Schiff-base intermediate with substrate; via pyruvic acid is the Ser113. A Pyruvic acid (Ser); by autocatalysis modification is found at Ser113. His118 functions as the Proton acceptor; for processing activity in the catalytic mechanism. Cys141 (proton donor; for catalytic activity) is an active-site residue.

The protein belongs to the prokaryotic AdoMetDC family. Type 2 subfamily. In terms of assembly, heterooctamer of four alpha and four beta chains arranged as a tetramer of alpha/beta heterodimers. Requires pyruvate as cofactor. Post-translationally, is synthesized initially as an inactive proenzyme. Formation of the active enzyme involves a self-maturation process in which the active site pyruvoyl group is generated from an internal serine residue via an autocatalytic post-translational modification. Two non-identical subunits are generated from the proenzyme in this reaction, and the pyruvate is formed at the N-terminus of the alpha chain, which is derived from the carboxyl end of the proenzyme. The post-translation cleavage follows an unusual pathway, termed non-hydrolytic serinolysis, in which the side chain hydroxyl group of the serine supplies its oxygen atom to form the C-terminus of the beta chain, while the remainder of the serine residue undergoes an oxidative deamination to produce ammonia and the pyruvoyl group blocking the N-terminus of the alpha chain.

The catalysed reaction is S-adenosyl-L-methionine + H(+) = S-adenosyl 3-(methylsulfanyl)propylamine + CO2. The protein operates within amine and polyamine biosynthesis; S-adenosylmethioninamine biosynthesis; S-adenosylmethioninamine from S-adenosyl-L-methionine: step 1/1. Catalyzes the decarboxylation of S-adenosylmethionine to S-adenosylmethioninamine (dcAdoMet), the propylamine donor required for the synthesis of the polyamines spermine and spermidine from the diamine putrescine. This chain is S-adenosylmethionine decarboxylase proenzyme, found in Azotobacter vinelandii (strain DJ / ATCC BAA-1303).